Reading from the N-terminus, the 221-residue chain is tRNA (guanine-N(7)-)-methyltransferase (221 aa).

Positions 46, 71, and 120 each coordinate S-adenosyl-L-methionine. Asp120 is an active-site residue. Asp156 is a substrate binding site.

This sequence belongs to the class I-like SAM-binding methyltransferase superfamily. TrmB family.

It catalyses the reaction guanosine(46) in tRNA + S-adenosyl-L-methionine = N(7)-methylguanosine(46) in tRNA + S-adenosyl-L-homocysteine. It participates in tRNA modification; N(7)-methylguanine-tRNA biosynthesis. In terms of biological role, catalyzes the formation of N(7)-methylguanine at position 46 (m7G46) in tRNA. The polypeptide is tRNA (guanine-N(7)-)-methyltransferase (Cytophaga hutchinsonii (strain ATCC 33406 / DSM 1761 / CIP 103989 / NBRC 15051 / NCIMB 9469 / D465)).